We begin with the raw amino-acid sequence, 22 residues long: Odorant-binding protein 1 (22 aa).

The protein belongs to the calycin superfamily. Lipocalin family. Homodimer. The N-terminus is blocked.

Binds the chemical odorant, 2-isobutyl-3-methoxypyrazine. In Oryctolagus cuniculus (Rabbit), this protein is Odorant-binding protein 1.